The sequence spans 393 residues: ATP phosphoribosyltransferase regulatory subunit (393 aa).

Belongs to the class-II aminoacyl-tRNA synthetase family. HisZ subfamily. Heteromultimer composed of HisG and HisZ subunits.

The protein localises to the cytoplasm. The protein operates within amino-acid biosynthesis; L-histidine biosynthesis; L-histidine from 5-phospho-alpha-D-ribose 1-diphosphate: step 1/9. Required for the first step of histidine biosynthesis. May allow the feedback regulation of ATP phosphoribosyltransferase activity by histidine. This Marinobacter nauticus (strain ATCC 700491 / DSM 11845 / VT8) (Marinobacter aquaeolei) protein is ATP phosphoribosyltransferase regulatory subunit.